Here is a 358-residue protein sequence, read N- to C-terminus: DNA methyltransferase CcrM (358 aa).

Positions 1 to 260 (MKFGPETIIH…AKVVPIAPED (260 aa)) are methyltransferase. 2 DNA-binding regions (target strand DNA) span residues 31-34 (DPPY) and 39-45 (GGDLLRP). DNA-binding regions (non-target strand DNA) lie at residues 93 to 94 (YH) and 109 to 110 (WI). Histidine 94 provides a ligand contact to dsDNA. The target strand DNA DNA-binding region spans 122–132 (MPNFKGTRFAN). Residues 153 to 157 (YDALK) constitute a DNA-binding region (non-target strand DNA). DsDNA is bound by residues glutamine 164 and arginine 179. Positions 187–193 (KAHPTQK) form a DNA-binding region, target strand DNA. Residues 259–355 (EDLDVMGSKR…IDVLRAQVRA (97 aa)) form the RAMA domain. Positions 261–270 (LDVMGSKRAE) are linker. The dsDNA site is built by lysine 267 and arginine 272. A non-specific DNA-binding region spans residues 272–358 (RVPFGTIVEA…LRAQVRAGMN (87 aa)). DNA-binding regions (non-target strand DNA) lie at residues 315–317 (SIH) and 330–332 (NGW). Arginine 350 contributes to the dsDNA binding site.

The protein belongs to the N(4)/N(6)-methyltransferase family. As to quaternary structure, homodimer. Post-translationally, rapidly degraded by Lon protease prior to cell division.

It carries out the reaction a 2'-deoxyadenosine in DNA + S-adenosyl-L-methionine = an N(6)-methyl-2'-deoxyadenosine in DNA + S-adenosyl-L-homocysteine + H(+). A beta subtype methylase that recognizes the double-stranded sequence 5'-GANTC-3' and methylates non-modifed A-2 on the hemimethylated, post-replicative DNA. Opens a bubble in the DNA at the recognition site, allowing precise recognition of the sequence and ensuring enzyme specificity. Functions only in the predivisional cell. Responsible for 5'-GANTC-3' methylation in the cell; methylation of hemimethylated sites generated after replication fork passage occurs late in the predivisional cell, near completion of chromosome replication but prior to cell division. Contributes to the accurate cell-cycle control of DNA replication and cellular morphology. In Caulobacter vibrioides (strain ATCC 19089 / CIP 103742 / CB 15) (Caulobacter crescentus), this protein is DNA methyltransferase CcrM (ccrMIM).